The following is a 271-amino-acid chain: Mannosyl-3-phosphoglycerate phosphatase (271 aa).

Asp13 serves as the catalytic Nucleophile. Positions 13, 15, and 214 each coordinate Mg(2+).

Belongs to the HAD-like hydrolase superfamily. MPGP family. It depends on Mg(2+) as a cofactor.

It localises to the cytoplasm. The enzyme catalyses 2-O-(alpha-D-mannosyl)-3-phosphoglycerate + H2O = (2R)-2-O-(alpha-D-mannosyl)-glycerate + phosphate. The chain is Mannosyl-3-phosphoglycerate phosphatase (yedP) from Shigella sonnei (strain Ss046).